Reading from the N-terminus, the 487-residue chain is Structure-specific endonuclease subunit SLX1 (487 aa).

The 83-residue stretch at 27-109 folds into the GIY-YIG domain; sequence PFYACYLLRS…QKPELSRHLR (83 aa). The interval 44–69 is disordered; it reads RTYVGSTPDPPRRIRQHNGELKQGAW. The SLX1-type zinc-finger motif lies at 262–328; it reads CHLCQERIAF…LPYQGLCPNC (67 aa). Residues 359–396 show a composition bias toward basic and acidic residues; it reads KAEKAEKAEKAEKAEKAEKAEKAGRKVRQREMKTKKGD. 2 disordered regions span residues 359–407 and 433–475; these read KAEK…QPES and PARS…SEPE. Residues 397–407 are compositionally biased toward polar residues; that stretch reads QSNGTVAQPES. The segment covering 438–455 has biased composition (basic and acidic residues); sequence KSKDVGGEGIRHSTHTDD. The span at 465 to 475 shows a compositional bias: acidic residues; the sequence is ETEDESESEPE.

This sequence belongs to the SLX1 family. As to quaternary structure, forms a heterodimer with SLX4. It depends on a divalent metal cation as a cofactor.

The protein localises to the nucleus. Its function is as follows. Catalytic subunit of the SLX1-SLX4 structure-specific endonuclease that resolves DNA secondary structures generated during DNA repair and recombination. Has endonuclease activity towards branched DNA substrates, introducing single-strand cuts in duplex DNA close to junctions with ss-DNA. The polypeptide is Structure-specific endonuclease subunit SLX1 (Cryptococcus neoformans var. neoformans serotype D (strain B-3501A) (Filobasidiella neoformans)).